We begin with the raw amino-acid sequence, 96 residues long: (4S)-4-hydroxy-5-phosphonooxypentane-2,3-dione isomerase (96 aa).

Positions 2 to 91 constitute an ABM domain; sequence HVTLVEINVH…MTGPRKKRLF (90 aa).

It belongs to the LsrG family. In terms of assembly, homodimer.

Its subcellular location is the cytoplasm. The enzyme catalyses (2S)-2-hydroxy-3,4-dioxopentyl phosphate = 3-hydroxy-2,4-dioxopentyl phosphate. In terms of biological role, involved in the degradation of phospho-AI-2, thereby terminating induction of the lsr operon and closing the AI-2 signaling cycle. Catalyzes the conversion of (4S)-4-hydroxy-5-phosphonooxypentane-2,3-dione (P-DPD) to 3-hydroxy-5-phosphonooxypentane-2,4-dione (P-HPD). This is (4S)-4-hydroxy-5-phosphonooxypentane-2,3-dione isomerase from Shigella flexneri serotype 5b (strain 8401).